The sequence spans 485 residues: Probable L-xylulose kinase (485 aa).

The protein belongs to the FGGY kinase family. As to quaternary structure, homodimer.

The catalysed reaction is L-xylulose + ATP = L-xylulose 5-phosphate + ADP + H(+). This Haemophilus influenzae (strain ATCC 51907 / DSM 11121 / KW20 / Rd) protein is Probable L-xylulose kinase (lyx).